Reading from the N-terminus, the 184-residue chain is ATP synthase subunit delta (184 aa).

The protein belongs to the ATPase delta chain family. As to quaternary structure, F-type ATPases have 2 components, F(1) - the catalytic core - and F(0) - the membrane proton channel. F(1) has five subunits: alpha(3), beta(3), gamma(1), delta(1), epsilon(1). CF(0) has four main subunits: a(1), b(1), b'(1) and c(10-14). The alpha and beta chains form an alternating ring which encloses part of the gamma chain. F(1) is attached to F(0) by a central stalk formed by the gamma and epsilon chains, while a peripheral stalk is formed by the delta, b and b' chains.

The protein resides in the cell inner membrane. Functionally, f(1)F(0) ATP synthase produces ATP from ADP in the presence of a proton or sodium gradient. F-type ATPases consist of two structural domains, F(1) containing the extramembraneous catalytic core and F(0) containing the membrane proton channel, linked together by a central stalk and a peripheral stalk. During catalysis, ATP synthesis in the catalytic domain of F(1) is coupled via a rotary mechanism of the central stalk subunits to proton translocation. Its function is as follows. This protein is part of the stalk that links CF(0) to CF(1). It either transmits conformational changes from CF(0) to CF(1) or is implicated in proton conduction. In Erythrobacter litoralis (strain HTCC2594), this protein is ATP synthase subunit delta.